The following is a 236-amino-acid chain: C-&gt;U-editing enzyme APOBEC-1 (236 aa).

The region spanning 10 to 134 (GDPTLRRRIE…QRNRQGLRDL (125 aa)) is the CMP/dCMP-type deaminase domain. H61 serves as a coordination point for Zn(2+). E63 functions as the Proton donor in the catalytic mechanism. Residues C93 and C96 each coordinate Zn(2+).

It belongs to the cytidine and deoxycytidylate deaminase family. Homodimer. Interacts with A1CF; form an mRNA editing complex. Interacts with RBM47; form an mRNA editing complex. Found in a complex with CELF2/CUGBP2 and A1CF. Interacts with HNRPAB. Interacts with SYNCRIP. Requires Zn(2+) as cofactor.

Its subcellular location is the cytoplasm. The protein resides in the nucleus. It carries out the reaction a cytidine in mRNA + H2O + H(+) = a uridine in mRNA + NH4(+). The catalysed reaction is cytidine(6666) in apoB mRNA + H2O + H(+) = uridine(6666) in apoB mRNA + NH4(+). Functionally, cytidine deaminase catalyzing the cytidine to uridine postranscriptional editing of a variety of mRNAs. Form complexes with cofactors that confer differential editing activity and selectivity. Responsible for the postranscriptional editing of a CAA codon for Gln to a UAA codon for stop in the apolipoprotein B mRNA. Also involved in CGA (Arg) to UGA (Stop) editing in the NF1 mRNA. May also play a role in the epigenetic regulation of gene expression by participating in DNA demethylation. The sequence is that of C-&gt;U-editing enzyme APOBEC-1 from Pongo pygmaeus (Bornean orangutan).